Reading from the N-terminus, the 264-residue chain is DNA repair protein RecO (264 aa).

This sequence belongs to the RecO family.

In terms of biological role, involved in DNA repair and RecF pathway recombination. The chain is DNA repair protein RecO from Leuconostoc citreum (strain KM20).